A 185-amino-acid chain; its full sequence is Glycerol-3-phosphate acyltransferase 4 (185 aa).

Transmembrane regions (helical) follow at residues 1-21 (MPLL…AYLA), 47-67 (LGRG…SLAI), 69-89 (LALA…AAVL), 113-133 (LLIA…VLLF), 137-157 (VIAA…LYGL), and 158-178 (PGGV…THFI).

It belongs to the PlsY family. In terms of assembly, probably interacts with PlsX.

It localises to the cell membrane. The catalysed reaction is an acyl phosphate + sn-glycerol 3-phosphate = a 1-acyl-sn-glycero-3-phosphate + phosphate. It functions in the pathway lipid metabolism; phospholipid metabolism. Functionally, catalyzes the transfer of an acyl group from acyl-phosphate (acyl-PO(4)) to glycerol-3-phosphate (G3P) to form lysophosphatidic acid (LPA). This enzyme utilizes acyl-phosphate as fatty acyl donor, but not acyl-CoA or acyl-ACP. The sequence is that of Glycerol-3-phosphate acyltransferase 4 from Dehalococcoides mccartyi (strain ATCC BAA-2266 / KCTC 15142 / 195) (Dehalococcoides ethenogenes (strain 195)).